The primary structure comprises 451 residues: Probable phosphoglucosamine mutase (451 aa).

Catalysis depends on S96, which acts as the Phosphoserine intermediate. Mg(2+)-binding residues include S96, D233, D235, and D237. S96 is subject to Phosphoserine.

The protein belongs to the phosphohexose mutase family. Requires Mg(2+) as cofactor. Activated by phosphorylation.

It carries out the reaction alpha-D-glucosamine 1-phosphate = D-glucosamine 6-phosphate. Catalyzes the conversion of glucosamine-6-phosphate to glucosamine-1-phosphate. In Pyrococcus abyssi (strain GE5 / Orsay), this protein is Probable phosphoglucosamine mutase.